A 270-amino-acid chain; its full sequence is ATP synthase subunit b 1 (270 aa).

A helical transmembrane segment spans residues 2–22; it reads LIDWFTVIAQLINFLVLVWLL.

It belongs to the ATPase B chain family. As to quaternary structure, F-type ATPases have 2 components, F(1) - the catalytic core - and F(0) - the membrane proton channel. F(1) has five subunits: alpha(3), beta(3), gamma(1), delta(1), epsilon(1). F(0) has three main subunits: a(1), b(2) and c(10-14). The alpha and beta chains form an alternating ring which encloses part of the gamma chain. F(1) is attached to F(0) by a central stalk formed by the gamma and epsilon chains, while a peripheral stalk is formed by the delta and b chains.

Its subcellular location is the cell inner membrane. In terms of biological role, f(1)F(0) ATP synthase produces ATP from ADP in the presence of a proton or sodium gradient. F-type ATPases consist of two structural domains, F(1) containing the extramembraneous catalytic core and F(0) containing the membrane proton channel, linked together by a central stalk and a peripheral stalk. During catalysis, ATP synthesis in the catalytic domain of F(1) is coupled via a rotary mechanism of the central stalk subunits to proton translocation. Its function is as follows. Component of the F(0) channel, it forms part of the peripheral stalk, linking F(1) to F(0). The polypeptide is ATP synthase subunit b 1 (Marinomonas sp. (strain MWYL1)).